A 411-amino-acid polypeptide reads, in one-letter code: ATPase GET3B (411 aa).

A chloroplast-targeting transit peptide spans 1–67 (MATLSSYLLS…RRRNSLQVKS (67 aa)). 95–102 (KGGVGKTS) is a binding site for ATP. The active site involves Asp124. Asn348 contacts ATP.

Belongs to the arsA ATPase family.

Its subcellular location is the plastid. The protein resides in the chloroplast stroma. It catalyses the reaction ATP + H2O = ADP + phosphate + H(+). This Arabidopsis thaliana (Mouse-ear cress) protein is ATPase GET3B.